Consider the following 522-residue polypeptide: MRGPCSVITALLVVASSQIAAESDYRLQAYHHDVTAVGNAVVKPLPKRYLRGSQHVLDSNEERSVYSVLASMINEGVSKMPQAAEAVEKMPQAAEAVEKMPQAAEAVEKMPQAAEAVEKMPQAAEAVEKMPSAAMAGKKVSRVTKTGKKMPHAAEIEAVEETLHATNARKEPLRADFVEEMPHAAKAKEEMRRAKQHDLLRATEEADEALEKSWHSSEDTAAIGGASRGISSNVILSLKKWKNNFQGMRAMAVSGEHEDIIKPIHEAFVRLCGENMEPTTKEMTLIRNMLDWDVAASPESSHRQNLVSQAQRHVLIGLRIMQRDPEVWNEWNELSESLRFGVLDYLLNLHYQRWVRMYNIFKRHRPDKKDVPMNDKLSLGGNTDKNSALALQTHSKKQNLYPDEPSNVAWTSKKRDGSVLIERSKRTFNGNTDTASVPYKQLKMQSLKPVMPFLTRSTTSGHHSVSIKNPGLSFDGPIFAFVPPNVHKSQSLTPPLVHKDVDTELSLGGIYDRSTHKAPTVP.

The N-terminal stretch at 1–21 is a signal peptide; sequence MRGPCSVITALLVVASSQIAA. The RxLR-dEER signature appears at 48–63; sequence RYLRGSQHVLDSNEER.

This sequence belongs to the RxLR effector family.

The protein localises to the secreted. The protein resides in the host nucleus. Its subcellular location is the host cytoplasm. Functionally, secreted effector that dos not suppress the host cell death induced by cell death-inducing proteins. The chain is Secreted RxLR effector protein 105 from Plasmopara viticola (Downy mildew of grapevine).